We begin with the raw amino-acid sequence, 330 residues long: PDZ and LIM domain protein 4 (330 aa).

The region spanning 8–84 (RGPSPWGFRL…QLLLSVSRAE (77 aa)) is the PDZ domain. Disordered regions lie at residues 106-152 (EPEP…SSSA) and 163-182 (LHISPSQSTDPLKSLPRNRN). The span at 139–152 (QHPQPSRPHASSSA) shows a compositional bias: polar residues. In terms of domain architecture, LIM zinc-binding spans 255–305 (CTRCGNGIVGTIVKARDKLYHPECFMCDDCGLNLKQRGYFFIEEQLYCETH).

As to quaternary structure, interacts (via LIM domain) with PTPN13. Interacts (via PDZ domain) with ACTN1.

Its subcellular location is the cytoplasm. The protein resides in the cytoskeleton. It is found in the cell projection. The protein localises to the dendritic spine. It localises to the early endosome membrane. Its subcellular location is the recycling endosome membrane. The protein resides in the nucleus. It is found in the perinuclear region. The protein localises to the lamellipodium. It localises to the synapse. Its subcellular location is the synaptosome. In terms of biological role, suppresses SRC activation by recognizing and binding to active SRC and facilitating PTPN13-mediated dephosphorylation of SRC 'Tyr-419' leading to its inactivation. Inactivated SRC dissociates from this protein allowing the initiation of a new SRC inactivation cycle. Involved in reorganization of the actin cytoskeleton. In nonmuscle cells, binds to ACTN1 (alpha-actinin-1), increases the affinity of ACTN1 to F-actin (filamentous actin), and promotes formation of actin stress fibers. Involved in regulation of the synaptic AMPA receptor transport in dendritic spines of hippocampal pyramidal neurons directing the receptors toward an insertion at the postsynaptic membrane. Links endosomal surface-internalized GRIA1-containing AMPA receptors to the alpha-actinin/actin cytoskeleton. Increases AMPA receptor-mediated excitatory postsynaptic currents in neurons. The protein is PDZ and LIM domain protein 4 (PDLIM4) of Gallus gallus (Chicken).